The sequence spans 142 residues: Negative cofactor 2 complex subunit alpha (142 aa).

Residues 1-11 are compositionally biased toward polar residues; sequence MADQVPVTTQL. Positions 1-43 are disordered; that stretch reads MADQVPVTTQLPPIKPEHEVPLDAGGSPVGNMGTNSNNNNELG. A Phosphoserine modification is found at serine 27. In terms of domain architecture, Histone-fold spans 29-137; that stretch reads VGNMGTNSNN…LCVEEGQTQP (109 aa). A Phosphoserine modification is found at serine 141.

This sequence belongs to the NC2 alpha/DRAP1 family. As to quaternary structure, component of the NC2 (negative cofactor 2) complex composed of BUR6 and NCB2. The NC2 complex associates with SPT15/TBP. Interacts with SPT15/TBP.

The protein resides in the nucleus. Its function is as follows. Component of the NC2 complex which represses RNA polymerase II transcription through binding to SPT15/TBP and thereby inhibiting the assembly of the preinitiation complex. The NC2 complex may also mediate transcriptional activation from TATA-driven promoters through association with SPT15/TBP. This Saccharomyces cerevisiae (strain ATCC 204508 / S288c) (Baker's yeast) protein is Negative cofactor 2 complex subunit alpha (BUR6).